The following is a 135-amino-acid chain: MLSPKKTRFRKQHRGRMKGISSRGNYICFGRYALQALEPAWITSRQIEAGRRAMTRNVRRGGKIWVRIFPDKPVTARSTEARMGAGKGDPKYWVAVVKPGRILYEMGGVTKNIARRAISIAASKMPIRTQFIISG.

Belongs to the universal ribosomal protein uL16 family. In terms of assembly, part of the 50S ribosomal subunit.

The protein localises to the plastid. The protein resides in the chloroplast. The sequence is that of Large ribosomal subunit protein uL16c from Jasminum nudiflorum (Winter jasmine).